The sequence spans 208 residues: Na(+)-translocating NADH-quinone reductase subunit D (208 aa).

A run of 5 helical transmembrane segments spans residues 42–62 (IVMTFAVIFVTAFSNLFISLI), 70–90 (VRIIVQMAIIASLVILVDQIL), 103–123 (VFVGLIITNCIVMGRAEAFAM), 131–151 (FVDGIGNGLGYGAILVSVAFI), and 178–198 (NGLFLLAPSAFFIIGFIIWGI).

This sequence belongs to the NqrDE/RnfAE family. In terms of assembly, composed of six subunits; NqrA, NqrB, NqrC, NqrD, NqrE and NqrF.

It is found in the cell inner membrane. It catalyses the reaction a ubiquinone + n Na(+)(in) + NADH + H(+) = a ubiquinol + n Na(+)(out) + NAD(+). Functionally, NQR complex catalyzes the reduction of ubiquinone-1 to ubiquinol by two successive reactions, coupled with the transport of Na(+) ions from the cytoplasm to the periplasm. NqrA to NqrE are probably involved in the second step, the conversion of ubisemiquinone to ubiquinol. In Pasteurella multocida (strain Pm70), this protein is Na(+)-translocating NADH-quinone reductase subunit D.